The following is a 766-amino-acid chain: Serine/threonine-protein kinase B-raf (766 aa).

A compositionally biased stretch (gly residues) spans 1 to 13 (MAALSGGGGGGAE). Residues 1-38 (MAALSGGGGGGAEPGQALFNGDMEPEAGAGAGAAASSA) are disordered. The residue at position 2 (Ala2) is an N-acetylalanine. Ser151 is modified (phosphoserine). An RBD domain is found at 155-227 (PIVRVFLPNK…TGEELHVEVL (73 aa)). The Phorbol-ester/DAG-type zinc-finger motif lies at 234–280 (THNFVRKTFFTLAFCDFCRKLLFQGFRCQTCGYKFHQRCSTEVPLMC). Residues His235, Cys248, Cys251, Cys261, Cys264, His269, Cys272, and Cys280 each coordinate Zn(2+). Positions 308 to 454 (AETALTSGSS…DSSDDWEIPD (147 aa)) are disordered. The segment covering 314 to 341 (SGSSPSAPASDSIGPQILTSPSPSKSIP) has biased composition (low complexity). Ser333 is modified (phosphoserine). A compositionally biased stretch (basic and acidic residues) spans 348–363 (PADEDHRNQFGQRDRS). At Ser365 the chain carries Phosphoserine; by SGK1. Phosphothreonine; by autocatalysis is present on Thr373. Thr396 bears the Phosphothreonine mark. Residue Ser399 is modified to Phosphoserine. Residue Thr401 is modified to Phosphothreonine. A compositionally biased stretch (basic and acidic residues) spans 423–447 (QRERKSSSSSEDRNRMKTLGRRDSS). Ser446 and Ser447 each carry phosphoserine. The 261-residue stretch at 457-717 (ITVGQRIGSG…PQILASIELL (261 aa)) folds into the Protein kinase domain. ATP is bound by residues 463-471 (IGSGSFGTV) and Lys483. Asp576 (proton acceptor) is an active-site residue. A Glycyl lysine isopeptide (Lys-Gly) (interchain with G-Cter in ubiquitin) cross-link involves residue Lys578. Arg671 bears the Omega-N-methylarginine; by PRMT5 mark. 2 positions are modified to phosphoserine: Ser729 and Ser750. Thr753 is subject to Phosphothreonine; by MAPK1.

It belongs to the protein kinase superfamily. TKL Ser/Thr protein kinase family. RAF subfamily. As to quaternary structure, monomer. Homodimer. Heterodimerizes with RAF1, and the heterodimer possesses a highly increased kinase activity compared to the respective homodimers or monomers. Heterodimerization is mitogen-regulated and enhanced by 14-3-3 proteins. MAPK1/ERK2 activation can induce a negative feedback that promotes the dissociation of the heterodimer by phosphorylating BRAF at Thr-753. Heterodimerizes (via N-terminus) with KSR1 (via N-terminus) or KSR2 (via N-terminus) in a MAP2K1-dependent manner. Interacts with MAP2K1 and MAP2K2. Found in a complex with at least BRAF, HRAS, MAP2K1, MAPK3 and RGS14. Interacts with RIT1. Interacts (via N-terminus) with RGS14 (via RBD domains); the interaction mediates the formation of a ternary complex with RAF1, a ternary complex inhibited by GNAI1. Interacts with DGKH. Interacts with PRMT5. Interacts with KSR2. Interacts with AKAP13, MAP2K1 and KSR1. Identified in a complex with AKAP13, MAP2K1 and KSR1. Interacts with FNIP1 and FNIP2. Zn(2+) serves as cofactor. Phosphorylation at Ser-365 by SGK1 inhibits its activity. Phosphorylation at Thr-753 by MAPK1. Dephosphorylation of Ser-365 by the SHOC2-MRAS-PP1c (SMP) complex consisting of SHOC2, GTP-bound M-Ras/MRAS and the catalytic subunit of protein phosphatase 1 (PPP1CA, PPP1CB or PPP1CC); this relieves inactivation and stimulates kinase activity. Post-translationally, methylation at Arg-671 decreases stability and kinase activity. In terms of processing, ubiquitinated by RNF149; which leads to proteasomal degradation. Polyubiquitinated at Lys-578 in response to EGF. Brain and testis.

Its subcellular location is the nucleus. It localises to the cytoplasm. The protein localises to the cell membrane. It carries out the reaction L-seryl-[protein] + ATP = O-phospho-L-seryl-[protein] + ADP + H(+). It catalyses the reaction L-threonyl-[protein] + ATP = O-phospho-L-threonyl-[protein] + ADP + H(+). In quiescent cells, maintained in an inactive state via an intramolecular interaction between the protein kinase and N-terminal domains. Following mitogen-mediated cell activation, binds via its RGB domain to active HRAS (GTP-bound) which releases the inhibitory intramolecular interaction between the two domains. This allows the MAP2K1-mediated dimerization of KSR1 or KSR2, and BRAF which activates BRAF. Functionally, protein kinase involved in the transduction of mitogenic signals from the cell membrane to the nucleus. Phosphorylates MAP2K1, and thereby activates the MAP kinase signal transduction pathway. Phosphorylates PFKFB2. May play a role in the postsynaptic responses of hippocampal neurons. This Homo sapiens (Human) protein is Serine/threonine-protein kinase B-raf.